The primary structure comprises 132 residues: Small ribosomal subunit protein uS8 (132 aa).

Belongs to the universal ribosomal protein uS8 family. As to quaternary structure, part of the 30S ribosomal subunit. Contacts proteins S5 and S12.

Its function is as follows. One of the primary rRNA binding proteins, it binds directly to 16S rRNA central domain where it helps coordinate assembly of the platform of the 30S subunit. The sequence is that of Small ribosomal subunit protein uS8 from Bacillus mycoides (strain KBAB4) (Bacillus weihenstephanensis).